Reading from the N-terminus, the 829-residue chain is E3 ubiquitin-protein ligase Jade-2 (829 aa).

The interval 1-52 (MEEKRRKYSISSDNSDTTDGHVTSTSASRCSKLPSSTKSGWPRQNEKKPSEV) is disordered. A phosphoserine mark is found at S9 and S15. Polar residues predominate over residues 9–39 (SISSDNSDTTDGHVTSTSASRCSKLPSSTKS). N6-acetyllysine occurs at positions 32 and 38. S117 is subject to Phosphoserine. The segment at 199–249 (DVVCDVCRSPEGEDGNEMVFCDKCNVCVHQACYGILKVPTGSWLCRTCALG) adopts a PHD-type 1 zinc-finger fold. A C2HC pre-PHD-type zinc finger spans residues 251-285 (QPKCLLCPKRGGALKPTRSGTKWVHVSCALWIPEV). K298 bears the N6-acetyllysine mark. The PHD-type 2 zinc finger occupies 309–365 (LSCSLCKECTGTCIQCSMPSCITAFHVTCAFDRGLEMRTILADNDEVKFKSLCQEHS). Disordered stretches follow at residues 362–383 (QEHSDGGPRSEPTSEPVEPSQA), 517–555 (REPSGRRSKGKKNDSKRKGREGPKGSSPEKKEKVKAGPE), and 622–817 (SFMR…REAG). A compositionally biased stretch (basic residues) spans 522 to 535 (RRSKGKKNDSKRKG). Residues 536 to 552 (REGPKGSSPEKKEKVKA) are compositionally biased toward basic and acidic residues. The segment covering 637 to 650 (KARGRTRLPAKKKP) has biased composition (basic residues). Residues 776 to 786 (ERPKVSLHFDT) are compositionally biased toward basic and acidic residues. A compositionally biased stretch (acidic residues) spans 792–806 (FSDEEMSDSEVEAED).

Belongs to the JADE family. In terms of assembly, component of the HBO1 complex composed at least of ING4 or ING5, MYST2/HBO1, MEAF6, and one of JADE1, JADE2 and JADE3. Interacts (via C-terminus) with KDM1A (via AOD/Tower domain).

The enzyme catalyses S-ubiquitinyl-[E2 ubiquitin-conjugating enzyme]-L-cysteine + [acceptor protein]-L-lysine = [E2 ubiquitin-conjugating enzyme]-L-cysteine + N(6)-ubiquitinyl-[acceptor protein]-L-lysine.. It functions in the pathway protein modification; protein ubiquitination. Its function is as follows. Scaffold subunit of some HBO1 complexes, which have a histone H4 acetyltransferase activity. Acts as a E3 ubiquitin-protein ligase mediating the ubiquitination and subsequent proteasomal degradation of target protein histone demethylase KDM1A. Also acts as a ubiquitin ligase E3 toward itself. Positive regulator of neurogenesis. The chain is E3 ubiquitin-protein ligase Jade-2 (Jade2) from Mus musculus (Mouse).